Consider the following 235-residue polypeptide: Sugar fermentation stimulation protein homolog (235 aa).

It belongs to the SfsA family.

The protein is Sugar fermentation stimulation protein homolog of Photorhabdus laumondii subsp. laumondii (strain DSM 15139 / CIP 105565 / TT01) (Photorhabdus luminescens subsp. laumondii).